Reading from the N-terminus, the 434-residue chain is Enolase (434 aa).

Residue Gln-163 participates in (2R)-2-phosphoglycerate binding. Glu-205 functions as the Proton donor in the catalytic mechanism. The Mg(2+) site is built by Asp-243, Glu-291, and Asp-318. Residues Lys-343, Arg-372, Ser-373, and Lys-394 each coordinate (2R)-2-phosphoglycerate. The active-site Proton acceptor is Lys-343.

It belongs to the enolase family. Requires Mg(2+) as cofactor.

It is found in the cytoplasm. It localises to the secreted. The protein localises to the cell surface. It carries out the reaction (2R)-2-phosphoglycerate = phosphoenolpyruvate + H2O. It participates in carbohydrate degradation; glycolysis; pyruvate from D-glyceraldehyde 3-phosphate: step 4/5. Its function is as follows. Catalyzes the reversible conversion of 2-phosphoglycerate (2-PG) into phosphoenolpyruvate (PEP). It is essential for the degradation of carbohydrates via glycolysis. The chain is Enolase from Fusobacterium nucleatum subsp. nucleatum (strain ATCC 25586 / DSM 15643 / BCRC 10681 / CIP 101130 / JCM 8532 / KCTC 2640 / LMG 13131 / VPI 4355).